The chain runs to 256 residues: Kallikrein 1-related peptidase-like b4 (256 aa).

The signal sequence occupies residues 1 to 17 (MWFLILFLALSLGGIDA). Residues 18 to 24 (APPVQSQ) are activation peptide homolog. The Peptidase S1 domain maps to 18-253 (APPVQSQVDC…FSSWIRETMA (236 aa)). A disulfide bridge links Cys45 with Cys61. Zn(2+) contacts are provided by Glu77 and His84. 3 disulfide bridges follow: Cys147–Cys214, Cys179–Cys193, and Cys204–Cys229.

This sequence belongs to the peptidase S1 family. Kallikrein subfamily. 7S nerve growth factor is composed of two alpha chains, a beta dimer composed of identical chains, and two gamma chains. Requires Zn(2+) as cofactor. In terms of processing, the presence of Gln-24 prevents cleavage of the activation peptide, which remains attached at the amino end of the mature alpha chain.

This is Kallikrein 1-related peptidase-like b4 (Klk1b4) from Mus musculus (Mouse).